Consider the following 358-residue polypeptide: Peptide chain release factor 1 (358 aa).

Gln235 is modified (N5-methylglutamine).

The protein belongs to the prokaryotic/mitochondrial release factor family. Post-translationally, methylated by PrmC. Methylation increases the termination efficiency of RF1.

The protein resides in the cytoplasm. In terms of biological role, peptide chain release factor 1 directs the termination of translation in response to the peptide chain termination codons UAG and UAA. The protein is Peptide chain release factor 1 of Nitrosospira multiformis (strain ATCC 25196 / NCIMB 11849 / C 71).